Consider the following 66-residue polypeptide: Phylloseptin-S1 (66 aa).

An N-terminal signal peptide occupies residues 1 to 22 (MAFLKKSLFLVLFLGLVSLSIC). The propeptide occupies 23 to 46 (EEEKRETEEEEHDQEEDDKSEEKR). The tract at residues 25-44 (EKRETEEEEHDQEEDDKSEE) is disordered. Residues 30 to 41 (EEEEHDQEEDDK) show a composition bias toward acidic residues. Phe65 is subject to Phenylalanine amide.

As to expression, expressed by the skin glands.

It is found in the secreted. Its subcellular location is the target cell membrane. Functionally, antimicrobial peptide with high activity against Gram-positive bacteria, low activity against Gram-negative bacteria, and moderate activity against fungi. Acts on bacterial biofilms (S.aureus) with the same potency than on bacteria. Acts by causing bacterial membrane disruption inducing leakage of the intracellular content followed by cell death. It adopts an alpha-helical amphipathic structure in membrane environments. Also shows highly potent antiparasitic activity against Leishmania species. Shows low hemolytic activity on horse and human erythrocytes (LC(50)=39 uM). Is also active on human monocytes (IC(50)=23 uM). The protein is Phylloseptin-S1 of Phyllomedusa sauvagei (Sauvage's leaf frog).